The primary structure comprises 295 residues: ATP synthase gamma chain (295 aa).

Belongs to the ATPase gamma chain family. F-type ATPases have 2 components, CF(1) - the catalytic core - and CF(0) - the membrane proton channel. CF(1) has five subunits: alpha(3), beta(3), gamma(1), delta(1), epsilon(1). CF(0) has three main subunits: a, b and c.

It is found in the cell membrane. Produces ATP from ADP in the presence of a proton gradient across the membrane. The gamma chain is believed to be important in regulating ATPase activity and the flow of protons through the CF(0) complex. This is ATP synthase gamma chain from Desulforudis audaxviator (strain MP104C).